The sequence spans 954 residues: Glycine dehydrogenase (decarboxylating) (954 aa).

N6-(pyridoxal phosphate)lysine is present on lysine 704.

This sequence belongs to the GcvP family. The glycine cleavage system is composed of four proteins: P, T, L and H. Pyridoxal 5'-phosphate serves as cofactor.

The catalysed reaction is N(6)-[(R)-lipoyl]-L-lysyl-[glycine-cleavage complex H protein] + glycine + H(+) = N(6)-[(R)-S(8)-aminomethyldihydrolipoyl]-L-lysyl-[glycine-cleavage complex H protein] + CO2. The glycine cleavage system catalyzes the degradation of glycine. The P protein binds the alpha-amino group of glycine through its pyridoxal phosphate cofactor; CO(2) is released and the remaining methylamine moiety is then transferred to the lipoamide cofactor of the H protein. The sequence is that of Glycine dehydrogenase (decarboxylating) from Rhizobium leguminosarum bv. trifolii (strain WSM2304).